The following is a 231-amino-acid chain: Large ribosomal subunit protein uL1 (231 aa).

The protein belongs to the universal ribosomal protein uL1 family. In terms of assembly, part of the 50S ribosomal subunit.

Its function is as follows. Binds directly to 23S rRNA. The L1 stalk is quite mobile in the ribosome, and is involved in E site tRNA release. In terms of biological role, protein L1 is also a translational repressor protein, it controls the translation of the L11 operon by binding to its mRNA. The sequence is that of Large ribosomal subunit protein uL1 from Neisseria meningitidis serogroup C (strain 053442).